Here is a 170-residue protein sequence, read N- to C-terminus: Large ribosomal subunit protein uL22z (170 aa).

The protein belongs to the universal ribosomal protein uL22 family.

This Hordeum vulgare (Barley) protein is Large ribosomal subunit protein uL22z.